Consider the following 285-residue polypeptide: Shikimate dehydrogenase (NADP(+)) (285 aa).

Shikimate-binding positions include 20 to 22 and Ser-67; that span reads SIS. The active-site Proton acceptor is Lys-71. Positions 92 and 107 each coordinate shikimate. NADP(+) is bound by residues 129–133 and Ile-227; that span reads GAGGA. Residue Tyr-229 coordinates shikimate. Gly-250 contributes to the NADP(+) binding site.

Belongs to the shikimate dehydrogenase family. Homodimer.

It carries out the reaction shikimate + NADP(+) = 3-dehydroshikimate + NADPH + H(+). Its pathway is metabolic intermediate biosynthesis; chorismate biosynthesis; chorismate from D-erythrose 4-phosphate and phosphoenolpyruvate: step 4/7. Its function is as follows. Involved in the biosynthesis of the chorismate, which leads to the biosynthesis of aromatic amino acids. Catalyzes the reversible NADPH linked reduction of 3-dehydroshikimate (DHSA) to yield shikimate (SA). This chain is Shikimate dehydrogenase (NADP(+)), found in Streptococcus thermophilus (strain ATCC BAA-491 / LMD-9).